A 231-amino-acid chain; its full sequence is MEGCVSNIMICNLAYSGKLDELKERILADKSLATRTDQDSRTALHWACSAGHTEIVEFLLQLGVPVNDKDDAGWSPLHIAASAGRDEIVKALLVKGAHVNAVNQNGCTPLHYAASKNRHEIAVMLLEGGANPDAKDHYDATAMHRAAAKGNLKMVHILLFYKASTNIQDTEGNTPLHLACDEERVEEAKFLVTQGASIYIENKEEKTPLQVAKGGLGLILKRLAESEEASM.

ANK repeat units follow at residues 3 to 36 (GCVS…ATRT), 37 to 69 (DQDS…VNDK), 70 to 102 (DDAG…VNAV), 103 to 135 (NQNG…PDAK), 136 to 168 (DHYD…TNIQ), 169 to 201 (DTEG…IYIE), and 202 to 226 (NKEE…LAES).

As to quaternary structure, part of transient complex containing PSMD10, PSMC4, PSMC5 and PAAF1 formed during the assembly of the 26S proteasome. Stays associated throughout the assembly of the PA700/19S RC and is released upon association with the 20S core. Interacts with PSMC4. Interacts with RB1. Interacts with CDK4. Interacts with MDM2. Interacts with RELA. Associates with a CDK4:CCND2 serine/threonine kinase complex. Interacts with ARHGDIA and increases the interaction between ARHGDIA and RHOA, hence promotes ARHGDIA inactivation of RHOA and ROCK.

The protein resides in the cytoplasm. Its subcellular location is the nucleus. Functionally, acts as a chaperone during the assembly of the 26S proteasome, specifically of the PA700/19S regulatory complex (RC). In the initial step of the base subcomplex assembly is part of an intermediate PSMD10:PSMC4:PSMC5:PAAF1 module which probably assembles with a PSMD5:PSMC2:PSMC1:PSMD2 module. Independently of the proteasome, regulates EGF-induced AKT activation through inhibition of the RHOA/ROCK/PTEN pathway, leading to prolonged AKT activation. Plays an important role in RAS-induced tumorigenesis. Its function is as follows. Acts as an oncoprotein by being involved in negative regulation of tumor suppressors RB1 and p53/TP53. Overexpression is leading to phosphorylation of RB1 and proteasomal degradation of RB1. Regulates CDK4-mediated phosphorylation of RB1 by competing with CDKN2A for binding with CDK4. Facilitates binding of MDM2 to p53/TP53 and the mono- and polyubiquitination of p53/TP53 by MDM2 suggesting a function in targeting the TP53:MDM2 complex to the 26S proteasome. Involved in p53-independent apoptosis. Involved in regulation of NF-kappa-B by retaining it in the cytoplasm. Binds to the NF-kappa-B component RELA and accelerates its XPO1/CRM1-mediated nuclear export. In Mus musculus (Mouse), this protein is 26S proteasome non-ATPase regulatory subunit 10 (Psmd10).